The following is a 492-amino-acid chain: N-succinylglutamate 5-semialdehyde dehydrogenase (492 aa).

220–225 (GSASTG) provides a ligand contact to NAD(+). Active-site residues include Glu243 and Cys277.

The protein belongs to the aldehyde dehydrogenase family. AstD subfamily.

It carries out the reaction N-succinyl-L-glutamate 5-semialdehyde + NAD(+) + H2O = N-succinyl-L-glutamate + NADH + 2 H(+). It functions in the pathway amino-acid degradation; L-arginine degradation via AST pathway; L-glutamate and succinate from L-arginine: step 4/5. Its function is as follows. Catalyzes the NAD-dependent reduction of succinylglutamate semialdehyde into succinylglutamate. This is N-succinylglutamate 5-semialdehyde dehydrogenase from Salmonella typhi.